The following is a 420-amino-acid chain: Glutamyl-tRNA reductase (420 aa).

Substrate is bound by residues threonine 49–arginine 52, serine 109, glutamate 114–glutamine 116, and glutamine 120. Cysteine 50 (nucleophile) is an active-site residue. Glycine 189–isoleucine 194 is a binding site for NADP(+).

Belongs to the glutamyl-tRNA reductase family. Homodimer.

It catalyses the reaction (S)-4-amino-5-oxopentanoate + tRNA(Glu) + NADP(+) = L-glutamyl-tRNA(Glu) + NADPH + H(+). It functions in the pathway porphyrin-containing compound metabolism; protoporphyrin-IX biosynthesis; 5-aminolevulinate from L-glutamyl-tRNA(Glu): step 1/2. Its function is as follows. Catalyzes the NADPH-dependent reduction of glutamyl-tRNA(Glu) to glutamate 1-semialdehyde (GSA). The polypeptide is Glutamyl-tRNA reductase (Proteus mirabilis (strain HI4320)).